The sequence spans 46 residues: Esculentin-1SEa (46 aa).

Cysteines 40 and 46 form a disulfide.

In terms of tissue distribution, expressed by the skin glands.

It is found in the secreted. Mast cell degranulating peptide. Causes histamine release from rat peritoneal mast cells in vitro. Has antibacterial activity against the Gram-negative bacterium E.coli K12 and Gram-positive bacterium M.luteus NCT C2665. This chain is Esculentin-1SEa, found in Lithobates sevosus (Dusky gopher frog).